Consider the following 467-residue polypeptide: Ethanolamine ammonia-lyase reactivase EutA (467 aa).

This sequence belongs to the EutA family.

It localises to the bacterial microcompartment. Its pathway is amine and polyamine degradation; ethanolamine degradation. Functionally, reactivates suicidally inhibited ethanolamine ammonia-lyase (EAL), cyanocobalamin-inactivated EAL and O(2)-inactivated EAL; requires Mg(2+), ATP and adenosylcobalamin. Reactivation probably occurs by the ATP-dependent exchange of cobalamin. Protects EAL from inhibition by CN-B12, does not have adenosylation activity. In terms of biological role, expression of the eut operon allows this bacteria to use ethanolamine as a carbon, nitrogen and energy source. It relies on cobalamin (vitamin B12) both as a cofactor for the ethanolamine ammonia-lyase (EAL) activity and to induce the operon. EA enhances bacterial survival in macrophages in a concentration-dependent manner, suggesting it is an important nutrient during infection. This Salmonella typhimurium (strain LT2 / SGSC1412 / ATCC 700720) protein is Ethanolamine ammonia-lyase reactivase EutA.